The sequence spans 957 residues: Valine--tRNA ligase (957 aa).

The 'HIGH' region motif lies at 45 to 55 (PNVTGSLHMGH). The 'KMSKS' region motif lies at 571 to 575 (KMSKS). Position 574 (Lys574) interacts with ATP. Residues 887 to 946 (VVDFAAEQARLEKELGKAEADIKRAEAKLANEKFVANAAEEVVEEEREKREAAVARKVKI) adopt a coiled-coil conformation.

This sequence belongs to the class-I aminoacyl-tRNA synthetase family. ValS type 1 subfamily. Monomer.

It localises to the cytoplasm. The enzyme catalyses tRNA(Val) + L-valine + ATP = L-valyl-tRNA(Val) + AMP + diphosphate. Functionally, catalyzes the attachment of valine to tRNA(Val). As ValRS can inadvertently accommodate and process structurally similar amino acids such as threonine, to avoid such errors, it has a 'posttransfer' editing activity that hydrolyzes mischarged Thr-tRNA(Val) in a tRNA-dependent manner. In Rhodopseudomonas palustris (strain ATCC BAA-98 / CGA009), this protein is Valine--tRNA ligase.